We begin with the raw amino-acid sequence, 222 residues long: UPF0585 protein CG18661 (222 aa).

The protein belongs to the UPF0585 family.

The chain is UPF0585 protein CG18661 from Drosophila melanogaster (Fruit fly).